Here is a 718-residue protein sequence, read N- to C-terminus: DNA ligase (718 aa).

NAD(+) is bound by residues 44-48, 93-94, and glutamate 127; these read DADYD and SL. Residue lysine 129 is the N6-AMP-lysine intermediate of the active site. Residues arginine 150, glutamate 186, lysine 302, and lysine 326 each coordinate NAD(+). 4 residues coordinate Zn(2+): cysteine 432, cysteine 435, cysteine 456, and cysteine 462. Positions 640-718 constitute a BRCT domain; the sequence is TAGSPVAGKT…EDEWLALISG (79 aa).

Belongs to the NAD-dependent DNA ligase family. LigA subfamily. Requires Mg(2+) as cofactor. The cofactor is Mn(2+).

It catalyses the reaction NAD(+) + (deoxyribonucleotide)n-3'-hydroxyl + 5'-phospho-(deoxyribonucleotide)m = (deoxyribonucleotide)n+m + AMP + beta-nicotinamide D-nucleotide.. Its function is as follows. DNA ligase that catalyzes the formation of phosphodiester linkages between 5'-phosphoryl and 3'-hydroxyl groups in double-stranded DNA using NAD as a coenzyme and as the energy source for the reaction. It is essential for DNA replication and repair of damaged DNA. The protein is DNA ligase of Rhizobium etli (strain CIAT 652).